A 311-amino-acid chain; its full sequence is Ribonuclease HIII (311 aa).

In terms of domain architecture, RNase H type-2 spans 95 to 311 (MSIVGSDEVG…NTEKAFRLLK (217 aa)). A divalent metal cation contacts are provided by Asp101, Glu102, and Asp206.

The protein belongs to the RNase HII family. RnhC subfamily. The cofactor is Mn(2+). Requires Mg(2+) as cofactor.

The protein localises to the cytoplasm. The enzyme catalyses Endonucleolytic cleavage to 5'-phosphomonoester.. In terms of biological role, endonuclease that specifically degrades the RNA of RNA-DNA hybrids. The sequence is that of Ribonuclease HIII from Bacillus cereus (strain ZK / E33L).